The chain runs to 321 residues: Homoserine kinase (321 aa).

It belongs to the pseudomonas-type ThrB family.

It catalyses the reaction L-homoserine + ATP = O-phospho-L-homoserine + ADP + H(+). Its pathway is amino-acid biosynthesis; L-threonine biosynthesis; L-threonine from L-aspartate: step 4/5. The sequence is that of Homoserine kinase from Rhizobium johnstonii (strain DSM 114642 / LMG 32736 / 3841) (Rhizobium leguminosarum bv. viciae).